A 567-amino-acid polypeptide reads, in one-letter code: Fanconi anemia group C protein homolog (567 aa).

Belongs to the multisubunit FA complex composed of FANCA, FANCB, FANCC, FANCE, FANCF, FANCG, FANCL/PHF9 and FANCM. This complex may also include HSP70. Interacts with ZBTB32. Upon IFNG induction, interacts with STAT1. Interacts with CDK1. Interacts with EIF2AK2.

It is found in the nucleus. Its subcellular location is the cytoplasm. Functionally, DNA repair protein that may operate in a postreplication repair or a cell cycle checkpoint function. May be implicated in interstrand DNA cross-link repair and in the maintenance of normal chromosome stability. Upon IFNG induction, may facilitate STAT1 activation by recruiting STAT1 to IFNGR1. The polypeptide is Fanconi anemia group C protein homolog (FANCC) (Bos taurus (Bovine)).